Consider the following 71-residue polypeptide: Ubiquinol-cytochrome c reductase complex assembly factor 6 (71 aa).

Residues 1-8 lie on the Mitochondrial matrix side of the membrane; the sequence is MPAGVPMS. A helical; Signal-anchor for type II membrane protein membrane pass occupies residues 9-25; the sequence is TYLKMLAASLLAMCAGA. The Mitochondrial intermembrane portion of the chain corresponds to 26–71; the sequence is EVVHRYYRPDLTIPEIPPKRGELKTELLGLKERKHKPQISQQEELK. A disordered region spans residues 52–71; the sequence is LLGLKERKHKPQISQQEELK.

The protein belongs to the UQCC6 family. In terms of assembly, interacts with UQCRC1. Interacts with UQCRQ. Interacts with UQCC5. Forms a complex, named COMB/coordinator of mitochondrial CYTB biogenesis, composed of UQCC1, UQCC2, UQCC4, UQCC5 and UQCC6; stabilizes nascent cytochrome b/MT-CYB and promotes its membrane insertion. Forms a complex, named COMA, composed of UQCC1, UQCC2 and UQCC4; activates MT-CYB translation. Forms a complex, named COMC, composed of UQCC1, UQCC2; UQCC3 and UQCC4; mediates MT-CYB hemylation and association with the first nuclear-encoded complex III subunit UQCRQ. Interacts with MT-CYB.

The protein resides in the mitochondrion inner membrane. Functionally, required for the assembly and stability of the mitochondrial ubiquinol-cytochrome c reductase complex (complex III (CIII) or cytochrome b-c1 complex), a multisubunit transmembrane complex that is part of the mitochondrial electron transport chain (ETC) which drives oxidative phosphorylation. Mediates early complex III biogenesis. Participates in regulating the levels of electron transport chain proteins, and therefore energy supply, in response to changes in energy demand. Also required for cytochrome c oxidase complex (complex IV) assembly. This is Ubiquinol-cytochrome c reductase complex assembly factor 6 from Pongo abelii (Sumatran orangutan).